The sequence spans 362 residues: UDP-N-acetylglucosamine--N-acetylmuramyl-(pentapeptide) pyrophosphoryl-undecaprenol N-acetylglucosamine transferase (362 aa).

Residues 14–16 (TGG), Arg-170, Ser-199, and Gln-289 each bind UDP-N-acetyl-alpha-D-glucosamine.

It belongs to the glycosyltransferase 28 family. MurG subfamily.

The protein localises to the cell inner membrane. The catalysed reaction is di-trans,octa-cis-undecaprenyl diphospho-N-acetyl-alpha-D-muramoyl-L-alanyl-D-glutamyl-meso-2,6-diaminopimeloyl-D-alanyl-D-alanine + UDP-N-acetyl-alpha-D-glucosamine = di-trans,octa-cis-undecaprenyl diphospho-[N-acetyl-alpha-D-glucosaminyl-(1-&gt;4)]-N-acetyl-alpha-D-muramoyl-L-alanyl-D-glutamyl-meso-2,6-diaminopimeloyl-D-alanyl-D-alanine + UDP + H(+). The protein operates within cell wall biogenesis; peptidoglycan biosynthesis. Functionally, cell wall formation. Catalyzes the transfer of a GlcNAc subunit on undecaprenyl-pyrophosphoryl-MurNAc-pentapeptide (lipid intermediate I) to form undecaprenyl-pyrophosphoryl-MurNAc-(pentapeptide)GlcNAc (lipid intermediate II). This chain is UDP-N-acetylglucosamine--N-acetylmuramyl-(pentapeptide) pyrophosphoryl-undecaprenol N-acetylglucosamine transferase, found in Borrelia hermsii (strain HS1 / DAH).